Reading from the N-terminus, the 404-residue chain is Cysteine desulfurase IscS (404 aa).

Pyridoxal 5'-phosphate contacts are provided by residues 75 to 76, Asn-155, Gln-183, and 203 to 205; these read AT and TGH. N6-(pyridoxal phosphate)lysine is present on Lys-206. Residue Thr-243 coordinates pyridoxal 5'-phosphate. Catalysis depends on Cys-328, which acts as the Cysteine persulfide intermediate. Cys-328 serves as a coordination point for [2Fe-2S] cluster.

Belongs to the class-V pyridoxal-phosphate-dependent aminotransferase family. NifS/IscS subfamily. In terms of assembly, homodimer. Forms a heterotetramer with IscU, interacts with other sulfur acceptors. It depends on pyridoxal 5'-phosphate as a cofactor.

The protein localises to the cytoplasm. It carries out the reaction (sulfur carrier)-H + L-cysteine = (sulfur carrier)-SH + L-alanine. Its pathway is cofactor biosynthesis; iron-sulfur cluster biosynthesis. Master enzyme that delivers sulfur to a number of partners involved in Fe-S cluster assembly, tRNA modification or cofactor biosynthesis. Catalyzes the removal of elemental sulfur atoms from cysteine to produce alanine. Functions as a sulfur delivery protein for Fe-S cluster synthesis onto IscU, an Fe-S scaffold assembly protein, as well as other S acceptor proteins. The chain is Cysteine desulfurase IscS from Cronobacter sakazakii (strain ATCC BAA-894) (Enterobacter sakazakii).